Consider the following 486-residue polypeptide: Pentatricopeptide repeat-containing protein At2g01860 (486 aa).

Residues 111 to 137 form a disordered region; sequence QKPDKPSRVRPLPLPQPHKLRPLGLPT. PPR repeat units lie at residues 290-321, 327-361, 362-396, 397-431, and 432-466; these read DSSVYVKMILEIAKNPDKYHLVVALLEELKKR, SQQDCTSIMKICVKLGEFELVESLFDWFKASNREP, SVVMYTTMIHSRYSEQKYREAMSVVWEMEESNCLL, DLPAYRVVIKLFVALDDLGRAMRYYSKLKEAGFSP, and TYDIYRDMISVYTASGRLTKCKEICKEVEDAGLRL.

Belongs to the PPR family. P subfamily.

The polypeptide is Pentatricopeptide repeat-containing protein At2g01860 (EMB975) (Arabidopsis thaliana (Mouse-ear cress)).